Reading from the N-terminus, the 213-residue chain is Histone H1.2 (213 aa).

The span at 1–17 (MSETAPAAPAAAPPAEK) shows a compositional bias: low complexity. The tract at residues 1–41 (MSETAPAAPAAAPPAEKTPVKKKAAKKPAGARRKASGPPVS) is disordered. The residue at position 2 (serine 2) is an N-acetylserine; partial. Serine 2 is subject to Phosphoserine. At lysine 17 the chain carries N6-acetyllysine. Positions 20–35 (VKKKAAKKPAGARRKA) are enriched in basic residues. Residues lysine 23, lysine 26, and lysine 27 each carry the N6-(2-hydroxyisobutyryl)lysine modification. Residue lysine 34 is modified to N6-(beta-hydroxybutyryl)lysine; alternate. Residue lysine 34 is modified to N6-crotonyllysine; alternate. Lysine 34 carries the post-translational modification N6-methyllysine; alternate. In terms of domain architecture, H15 spans 36–109 (SGPPVSELIT…GASGSFKLNK (74 aa)). Lysine 46 is subject to N6-(2-hydroxyisobutyryl)lysine. Lysine 52 carries the N6-(beta-hydroxybutyryl)lysine; alternate modification. Position 52 is an N6-(2-hydroxyisobutyryl)lysine; alternate (lysine 52). A Citrulline modification is found at arginine 54. At lysine 63 the chain carries N6-(2-hydroxyisobutyryl)lysine. Lysine 64 is subject to N6-(beta-hydroxybutyryl)lysine; alternate. Lysine 64 carries the N6-crotonyllysine; alternate modification. At lysine 64 the chain carries N6-(2-hydroxyisobutyryl)lysine; alternate. N6-(2-hydroxyisobutyryl)lysine occurs at positions 75 and 81. N6-(beta-hydroxybutyryl)lysine; alternate is present on residues lysine 85 and lysine 90. N6-crotonyllysine; alternate occurs at positions 85, 90, and 97. An N6-(2-hydroxyisobutyryl)lysine; alternate mark is found at lysine 85, lysine 90, and lysine 97. Residues 95 to 213 (QTKGTGASGS…KPKKAAPKKK (119 aa)) form a disordered region. At lysine 97 the chain carries N6-succinyllysine; alternate. Serine 104 bears the Phosphoserine; by PKC mark. Lysine 106 is subject to N6-(beta-hydroxybutyryl)lysine. Residues lysine 110, lysine 117, lysine 121, lysine 129, and lysine 136 each carry the N6-(2-hydroxyisobutyryl)lysine modification. Over residues 119–140 (KAKKAGAAKPKKAAGAAKKTKK) the composition is skewed to basic residues. Threonine 146 bears the Phosphothreonine mark. Lysine 148 is subject to N6-(2-hydroxyisobutyryl)lysine. The segment covering 149–160 (KTAKKTPKKAKK) has biased composition (basic residues). N6-crotonyllysine; alternate occurs at positions 159 and 168. N6-(2-hydroxyisobutyryl)lysine; alternate is present on residues lysine 159 and lysine 168. Positions 169-186 (KVAKSPKKAKAAKPKKAA) are enriched in basic residues. Position 187 is an N6-methyllysine; by EHMT1 and EHMT2 (lysine 187). Serine 188 carries the ADP-ribosylserine modification. Residues 193-213 (VKPKAAKPKVAKPKKAAPKKK) show a composition bias toward basic residues.

It belongs to the histone H1/H5 family. In terms of processing, H1 histones are progressively phosphorylated during the cell cycle, becoming maximally phosphorylated during late G2 phase and M phase, and being dephosphorylated sharply thereafter. Post-translationally, crotonylation (Kcr) is specifically present in male germ cells and marks testis-specific genes in post-meiotic cells, including X-linked genes that escape sex chromosome inactivation in haploid cells. Crotonylation marks active promoters and enhancers and confers resistance to transcriptional repressors. It is also associated with post-meiotically activated genes on autosomes. ADP-ribosylated on Ser-188 in response to DNA damage. In terms of processing, citrullination at Arg-54 (H1R54ci) by PADI4 takes place within the DNA-binding site of H1 and results in its displacement from chromatin and global chromatin decondensation, thereby promoting pluripotency and stem cell maintenance.

It is found in the nucleus. The protein localises to the chromosome. Functionally, histone H1 protein binds to linker DNA between nucleosomes forming the macromolecular structure known as the chromatin fiber. Histones H1 are necessary for the condensation of nucleosome chains into higher-order structured fibers. Also acts as a regulator of individual gene transcription through chromatin remodeling, nucleosome spacing and DNA methylation. The polypeptide is Histone H1.2 (Bos taurus (Bovine)).